The chain runs to 496 residues: NADH-quinone oxidoreductase subunit N (496 aa).

Transmembrane regions (helical) follow at residues 12-32 (LNLI…IILI), 43-63 (SLYV…TLGL), 79-99 (VSIV…PLAL), 108-128 (SYPE…FMVA), 132-152 (LILI…LIAL), 166-186 (FTMG…IYAL), 207-227 (GLMI…AFKL), 257-277 (VAAF…GVEW), 280-300 (VVIL…ALVQ), 306-326 (MLAY…ALDT), 333-353 (IFFY…MLWM), 383-403 (AVIM…SIFW), 416-436 (GYVW…YYYL), and 464-484 (AVVG…QPLV).

It belongs to the complex I subunit 2 family. NDH-1 is composed of 14 different subunits. Subunits NuoA, H, J, K, L, M, N constitute the membrane sector of the complex.

It localises to the cell inner membrane. The enzyme catalyses a quinone + NADH + 5 H(+)(in) = a quinol + NAD(+) + 4 H(+)(out). Its function is as follows. NDH-1 shuttles electrons from NADH, via FMN and iron-sulfur (Fe-S) centers, to quinones in the respiratory chain. The immediate electron acceptor for the enzyme in this species is believed to be ubiquinone. Couples the redox reaction to proton translocation (for every two electrons transferred, four hydrogen ions are translocated across the cytoplasmic membrane), and thus conserves the redox energy in a proton gradient. The chain is NADH-quinone oxidoreductase subunit N from Sulfurovum sp. (strain NBC37-1).